The primary structure comprises 61 residues: Sec-independent protein translocase protein TatA (61 aa).

Residues Met1–Gly21 traverse the membrane as a helical segment.

This sequence belongs to the TatA/E family. The Tat system comprises two distinct complexes: a TatABC complex, containing multiple copies of TatA, TatB and TatC subunits, and a separate TatA complex, containing only TatA subunits. Substrates initially bind to the TatABC complex, which probably triggers association of the separate TatA complex to form the active translocon.

The protein localises to the cell inner membrane. In terms of biological role, part of the twin-arginine translocation (Tat) system that transports large folded proteins containing a characteristic twin-arginine motif in their signal peptide across membranes. TatA could form the protein-conducting channel of the Tat system. This Syntrophus aciditrophicus (strain SB) protein is Sec-independent protein translocase protein TatA.